The sequence spans 87 residues: uncharacterized protein (87 aa).

The segment at 67 to 87 is disordered; the sequence is TGGDPREAVVRPADQVEGYTG.

This is an uncharacterized protein from Mycobacterium bovis (strain ATCC BAA-935 / AF2122/97).